Here is a 1486-residue protein sequence, read N- to C-terminus: Chromosome partition protein MukB (1486 aa).

34–41 (GGNGAGKS) is a binding site for ATP. Coiled-coil stretches lie at residues 326–418 (LEAD…QYNQ), 444–480 (LETFQAKELEATEKMLSLEQKMSMAQTAHSQFEQAYQ), and 509–603 (RHLA…RAPV). A flexible hinge region spans residues 666-783 (PGGSEDQRLN…EVPLFGRAAR (118 aa)). Coiled coils occupy residues 835–923 (EAEI…AKLE), 977–1115 (EMLS…TAKA), and 1209–1266 (VEAI…QNVS).

It belongs to the SMC family. MukB subfamily. As to quaternary structure, homodimerization via its hinge domain. Binds to DNA via its C-terminal region. Interacts, and probably forms a ternary complex, with MukE and MukF via its C-terminal region. The complex formation is stimulated by calcium or magnesium. Interacts with tubulin-related protein FtsZ.

It is found in the cytoplasm. Its subcellular location is the nucleoid. In terms of biological role, plays a central role in chromosome condensation, segregation and cell cycle progression. Functions as a homodimer, which is essential for chromosome partition. Involved in negative DNA supercoiling in vivo, and by this means organize and compact chromosomes. May achieve or facilitate chromosome segregation by condensation DNA from both sides of a centrally located replisome during cell division. The sequence is that of Chromosome partition protein MukB from Escherichia coli O127:H6 (strain E2348/69 / EPEC).